Reading from the N-terminus, the 360-residue chain is Glutamate--cysteine ligase (360 aa).

This sequence belongs to the glutamate--cysteine ligase type 2 family. YbdK subfamily.

The enzyme catalyses L-cysteine + L-glutamate + ATP = gamma-L-glutamyl-L-cysteine + ADP + phosphate + H(+). Its function is as follows. Catalyzes the synthesis of gamma-glutamylcysteine (gamma-GC), the main low-molecular-weight thiol compound instead of glutathione in halophilic archaea. The chain is Glutamate--cysteine ligase from Halobacterium salinarum (strain ATCC 29341 / DSM 671 / R1).